We begin with the raw amino-acid sequence, 421 residues long: MTKGGLGIAAMSYVVIDYMRYVSPVWHSRLMPVLWSVLAIAVVTRVLFYKHWSKELRAAIPFLGSIVFLLCALLFEALCVRSVTAVLGLDWHRETPPLPDTGQWFLLALNESLPGTLVEILRAHIIGLHHFLMLFIMLGFSVVFDSVKAPGLGLGARYIFTMGVGRLLRAITFVSTILPSARPWCASARFNNVPSQPHRWAQKYYVPYANDPAAIRKLLHWDAAYADPGSYIGDYRADWGSMSFLSEFLRPSYSEGSSWFALLKKAGGGCNDLMYSGHMLVAVLTAMAWTEAYGGFSSAMIWLFVAHSAQREIRERHHYTVDCIVAIYVGILLWKMTGFIWSAERKTKQTKLEKIQNSLIHAAKDGDIETVRRLVEEIEVSSRVEKQSKVISNRTMTVFACATVITTLTIVILALTLTSDG.

The next 7 membrane-spanning stretches (helical) occupy residues 30 to 50 (LMPV…LFYK), 60 to 80 (IPFL…ALCV), 124 to 144 (HIIG…SVVF), 158 to 178 (YIFT…STIL), 286 to 306 (AMAW…LFVA), 323 to 343 (CIVA…IWSA), and 397 to 417 (TVFA…ALTL).

This sequence belongs to the sphingomyelin synthase family.

Its subcellular location is the membrane. The protein operates within sphingolipid metabolism. Catalyzes the biosynthesis of sphingolipids with very long-chain fatty acid (VLCFA). Required for the formation of plasmodesmal cytoplasmic sleeve during the transition from type I to type II plasmodesmata to modulate post-sieve elements (SE) unloading and symplastic cell-to-cell molecular trafficking at the phloem pole pericycle (PPP)-endodermis interface in roots. The polypeptide is Protein PHLOEM UNLOADING MODULATOR (Arabidopsis thaliana (Mouse-ear cress)).